Consider the following 476-residue polypeptide: Aspartyl/glutamyl-tRNA(Asn/Gln) amidotransferase subunit B (476 aa).

This sequence belongs to the GatB/GatE family. GatB subfamily. Heterotrimer of A, B and C subunits.

It catalyses the reaction L-glutamyl-tRNA(Gln) + L-glutamine + ATP + H2O = L-glutaminyl-tRNA(Gln) + L-glutamate + ADP + phosphate + H(+). The catalysed reaction is L-aspartyl-tRNA(Asn) + L-glutamine + ATP + H2O = L-asparaginyl-tRNA(Asn) + L-glutamate + ADP + phosphate + 2 H(+). Functionally, allows the formation of correctly charged Asn-tRNA(Asn) or Gln-tRNA(Gln) through the transamidation of misacylated Asp-tRNA(Asn) or Glu-tRNA(Gln) in organisms which lack either or both of asparaginyl-tRNA or glutaminyl-tRNA synthetases. The reaction takes place in the presence of glutamine and ATP through an activated phospho-Asp-tRNA(Asn) or phospho-Glu-tRNA(Gln). In Neisseria gonorrhoeae (strain ATCC 700825 / FA 1090), this protein is Aspartyl/glutamyl-tRNA(Asn/Gln) amidotransferase subunit B.